Here is a 471-residue protein sequence, read N- to C-terminus: Tripartite motif-containing protein 60 (471 aa).

An RING-type zinc finger spans residues 16 to 57 (CPICLEYLKDPVTINCGHNFCRSCLSVSWKDLDDTFPCPVCR). The B box-type zinc-finger motif lies at 92–133 (KENAMCEKHNQFLTLFCVKDLEILCTQCSFSTKHQKHYICPI). Cys97, His100, Cys119, and His125 together coordinate Zn(2+). Residues 171-223 (ELKKKVEYKREEINSEFEQIRLFLQNEQEMILRQIQDEEMNILAKLNENLVEL) are a coiled coil. The B30.2/SPRY domain occupies 277–470 (FSLPPQYSGL…LKICSVSDSE (194 aa)).

Belongs to the TRIM/RBCC family.

Its function is as follows. E3 SUMO-protein ligase that mediates SUMOylation of TAB2 leading to inhibition of NF-kappa-B and MAPK pathways by suppressing the TRAF6/TAB2/TAK1 complex. The protein is Tripartite motif-containing protein 60 (TRIM60) of Homo sapiens (Human).